A 654-amino-acid polypeptide reads, in one-letter code: Probable Xaa-Pro aminopeptidase P (654 aa).

4 residues coordinate Mn(2+): Asp-449, Asp-460, Glu-558, and Glu-572.

The protein belongs to the peptidase M24B family. Mn(2+) serves as cofactor.

It catalyses the reaction Release of any N-terminal amino acid, including proline, that is linked to proline, even from a dipeptide or tripeptide.. In terms of biological role, catalyzes the removal of a penultimate prolyl residue from the N-termini of peptides. The sequence is that of Probable Xaa-Pro aminopeptidase P (ampp) from Neosartorya fischeri (strain ATCC 1020 / DSM 3700 / CBS 544.65 / FGSC A1164 / JCM 1740 / NRRL 181 / WB 181) (Aspergillus fischerianus).